Consider the following 352-residue polypeptide: Quinolinate synthase (352 aa).

Residues H48 and S69 each contribute to the iminosuccinate site. C114 contacts [4Fe-4S] cluster. Iminosuccinate contacts are provided by residues Y140 to N142 and S157. Residue C201 coordinates [4Fe-4S] cluster. Residues H227 to E229 and T244 each bind iminosuccinate. C298 contacts [4Fe-4S] cluster.

It belongs to the quinolinate synthase family. Type 1 subfamily. It depends on [4Fe-4S] cluster as a cofactor.

Its subcellular location is the cytoplasm. It catalyses the reaction iminosuccinate + dihydroxyacetone phosphate = quinolinate + phosphate + 2 H2O + H(+). The protein operates within cofactor biosynthesis; NAD(+) biosynthesis; quinolinate from iminoaspartate: step 1/1. Catalyzes the condensation of iminoaspartate with dihydroxyacetone phosphate to form quinolinate. The polypeptide is Quinolinate synthase (Pseudomonas fluorescens (strain Pf0-1)).